A 66-amino-acid chain; its full sequence is Large ribosomal subunit protein bL33c (66 aa).

It belongs to the bacterial ribosomal protein bL33 family.

The protein resides in the plastid. The protein localises to the chloroplast. The polypeptide is Large ribosomal subunit protein bL33c (Phalaenopsis aphrodite subsp. formosana (Moth orchid)).